A 170-amino-acid chain; its full sequence is Lipoprotein signal peptidase (170 aa).

3 helical membrane-spanning segments follow: residues 12–32 (WYWI…WVLS), 67–87 (WQRW…SVWL), and 94–113 (MWRL…GNLI). Residues Asp-123 and Asp-141 contribute to the active site. The helical transmembrane segment at 133-153 (HFPAFNIADSAICIGAGLIIL) threads the bilayer.

Belongs to the peptidase A8 family.

The protein resides in the cell inner membrane. The enzyme catalyses Release of signal peptides from bacterial membrane prolipoproteins. Hydrolyzes -Xaa-Yaa-Zaa-|-(S,diacylglyceryl)Cys-, in which Xaa is hydrophobic (preferably Leu), and Yaa (Ala or Ser) and Zaa (Gly or Ala) have small, neutral side chains.. The protein operates within protein modification; lipoprotein biosynthesis (signal peptide cleavage). In terms of biological role, this protein specifically catalyzes the removal of signal peptides from prolipoproteins. This Shewanella piezotolerans (strain WP3 / JCM 13877) protein is Lipoprotein signal peptidase.